The following is a 302-amino-acid chain: Probable 2-(5''-triphosphoribosyl)-3'-dephosphocoenzyme-A synthase 1 (302 aa).

It belongs to the CitG/MdcB family.

The catalysed reaction is 3'-dephospho-CoA + ATP = 2'-(5''-triphospho-alpha-D-ribosyl)-3'-dephospho-CoA + adenine. This Salmonella paratyphi A (strain ATCC 9150 / SARB42) protein is Probable 2-(5''-triphosphoribosyl)-3'-dephosphocoenzyme-A synthase 1.